The sequence spans 1402 residues: DNA-directed RNA polymerase subunit beta' (1402 aa).

Residues Cys71, Cys73, Cys86, and Cys89 each coordinate Zn(2+). The Mg(2+) site is built by Asp462, Asp464, and Asp466. 4 residues coordinate Zn(2+): Cys811, Cys885, Cys892, and Cys895.

This sequence belongs to the RNA polymerase beta' chain family. The RNAP catalytic core consists of 2 alpha, 1 beta, 1 beta' and 1 omega subunit. When a sigma factor is associated with the core the holoenzyme is formed, which can initiate transcription. Mg(2+) serves as cofactor. Requires Zn(2+) as cofactor.

It catalyses the reaction RNA(n) + a ribonucleoside 5'-triphosphate = RNA(n+1) + diphosphate. In terms of biological role, DNA-dependent RNA polymerase catalyzes the transcription of DNA into RNA using the four ribonucleoside triphosphates as substrates. In Bartonella henselae (strain ATCC 49882 / DSM 28221 / CCUG 30454 / Houston 1) (Rochalimaea henselae), this protein is DNA-directed RNA polymerase subunit beta'.